The chain runs to 25 residues: Caerin-1.19 (25 aa).

Leucine amide is present on Leu-25.

The protein belongs to the frog skin active peptide (FSAP) family. Caerin subfamily. Expressed by the skin dorsal glands.

The protein resides in the secreted. Caerin-1.19 shows significant activity against Gram-positive organisms, but is less effective against Gram-negative organisms. This Ranoidea gracilenta (Dainty green tree frog) protein is Caerin-1.19.